The sequence spans 1264 residues: TBC1 domain family member 9 (1264 aa).

GRAM domains are found at residues Val146 to Ala213 and Glu293 to Asp361. Residues Lys410–Val456 are disordered. A compositionally biased stretch (low complexity) spans Ser425 to Ser441. Positions Gly515–Gly702 constitute a Rab-GAP TBC domain. Residues His886–Gly921 enclose the EF-hand domain. The span at Ser1119–Pro1138 shows a compositional bias: basic and acidic residues. The tract at residues Ser1119–Ser1162 is disordered.

In terms of biological role, may act as a GTPase-activating protein for Rab family protein(s). In Mus musculus (Mouse), this protein is TBC1 domain family member 9 (Tbc1d9).